The sequence spans 129 residues: Protein Turandot B1 (129 aa).

An N-terminal signal peptide occupies residues 1 to 21 (MNSATSLMCFALLLISPLCMG).

This sequence belongs to the Turandot family.

The protein localises to the secreted. Its function is as follows. A humoral factor that may play a role in stress tolerance. The protein is Protein Turandot B1 (TotB1) of Drosophila erecta (Fruit fly).